The following is a 137-amino-acid chain: Transcription antitermination protein NusB (137 aa).

This sequence belongs to the NusB family.

In terms of biological role, involved in transcription antitermination. Required for transcription of ribosomal RNA (rRNA) genes. Binds specifically to the boxA antiterminator sequence of the ribosomal RNA (rrn) operons. The chain is Transcription antitermination protein NusB from Borreliella afzelii (strain PKo) (Borrelia afzelii).